Consider the following 315-residue polypeptide: Ribose-phosphate pyrophosphokinase (315 aa).

ATP is bound by residues 37-39 (DGE) and 96-97 (RQ). Residues H131 and D170 each coordinate Mg(2+). The active site involves K194. D-ribose 5-phosphate-binding positions include R196, D220, and 224-228 (DTGGT).

It belongs to the ribose-phosphate pyrophosphokinase family. Class I subfamily. Homohexamer. Mg(2+) is required as a cofactor.

The protein localises to the cytoplasm. The catalysed reaction is D-ribose 5-phosphate + ATP = 5-phospho-alpha-D-ribose 1-diphosphate + AMP + H(+). Its pathway is metabolic intermediate biosynthesis; 5-phospho-alpha-D-ribose 1-diphosphate biosynthesis; 5-phospho-alpha-D-ribose 1-diphosphate from D-ribose 5-phosphate (route I): step 1/1. Involved in the biosynthesis of the central metabolite phospho-alpha-D-ribosyl-1-pyrophosphate (PRPP) via the transfer of pyrophosphoryl group from ATP to 1-hydroxyl of ribose-5-phosphate (Rib-5-P). The polypeptide is Ribose-phosphate pyrophosphokinase (Buchnera aphidicola subsp. Schizaphis graminum (strain Sg)).